Reading from the N-terminus, the 1213-residue chain is Filamin-A-interacting protein 1 (1213 aa).

Residues Met-1–Lys-70 are disordered. A compositionally biased stretch (basic and acidic residues) spans Thr-61–Lys-70. Phosphoserine is present on Ser-138. Coiled-coil stretches lie at residues Asp-192 to Cys-591 and Pro-624 to Arg-781. Disordered regions lie at residues Asn-878–Val-900 and Lys-949–Arg-976. Composition is skewed to polar residues over residues Pro-880–Pro-894 and Val-960–Thr-970. Ser-979 carries the post-translational modification Phosphoserine. The disordered stretch occupies residues Val-1103–Gly-1213. Over residues Val-1125 to Ser-1138 the composition is skewed to low complexity. Residues Ala-1139 to Thr-1156 show a composition bias toward polar residues. Over residues Ala-1168–Gly-1179 the composition is skewed to low complexity.

This sequence belongs to the FILIP1 family. In terms of assembly, interacts with FLNA. Interacts with RHOD (in GTP-bound form). As to expression, moderately expressed in adult heart and brain. Weakly expressed in lung, skeletal muscle, ovary, testis, kidney, and fetal brain, and hardly detectable in liver, pancreas, spleen, and fetal liver. Within brain, moderate expression is found in amygdala and caudate nucleus. Expressed in skin fibroblasts.

It is found in the cytoplasm. It localises to the cytoskeleton. Its function is as follows. By acting through a filamin-A/F-actin axis, it controls the start of neocortical cell migration from the ventricular zone. May be able to induce the degradation of filamin-A. This Homo sapiens (Human) protein is Filamin-A-interacting protein 1 (FILIP1).